Consider the following 108-residue polypeptide: MTSKTVTRADLASVVCRKVGLSHTESAALVELVLNEICNSLVRGEAVKLSSFATFQVRKKNERVGRNPKTGVEAPILPRRVVTFKAANVLKQRILDSHRARQKIISHE.

This sequence belongs to the bacterial histone-like protein family. As to quaternary structure, heterodimer of an alpha and a beta chain.

Its function is as follows. This protein is one of the two subunits of integration host factor, a specific DNA-binding protein that functions in genetic recombination as well as in transcriptional and translational control. The polypeptide is Integration host factor subunit alpha (Bartonella henselae (strain ATCC 49882 / DSM 28221 / CCUG 30454 / Houston 1) (Rochalimaea henselae)).